Reading from the N-terminus, the 260-residue chain is Imidazole glycerol phosphate synthase subunit HisF (260 aa).

Active-site residues include D11 and D130.

The protein belongs to the HisA/HisF family. In terms of assembly, heterodimer of HisH and HisF.

Its subcellular location is the cytoplasm. It carries out the reaction 5-[(5-phospho-1-deoxy-D-ribulos-1-ylimino)methylamino]-1-(5-phospho-beta-D-ribosyl)imidazole-4-carboxamide + L-glutamine = D-erythro-1-(imidazol-4-yl)glycerol 3-phosphate + 5-amino-1-(5-phospho-beta-D-ribosyl)imidazole-4-carboxamide + L-glutamate + H(+). It functions in the pathway amino-acid biosynthesis; L-histidine biosynthesis; L-histidine from 5-phospho-alpha-D-ribose 1-diphosphate: step 5/9. Functionally, IGPS catalyzes the conversion of PRFAR and glutamine to IGP, AICAR and glutamate. The HisF subunit catalyzes the cyclization activity that produces IGP and AICAR from PRFAR using the ammonia provided by the HisH subunit. The sequence is that of Imidazole glycerol phosphate synthase subunit HisF from Caulobacter sp. (strain K31).